Consider the following 335-residue polypeptide: Expansin-like protein 3 (335 aa).

Positions Met1–Ala20 are cleaved as a signal peptide. Over Gln21–Asn314 the chain is Extracellular. Residues Ala43–Asn143 enclose the Expansin-like EG45 domain. Intrachain disulfides connect Cys46–Cys76 and Cys79–Cys138. N-linked (GlcNAc...) asparagine glycosylation occurs at Asn87. Positions Tyr247–Ser276 are disordered. The span at Pro249–Pro272 shows a compositional bias: low complexity. The chain crosses the membrane as a helical span at residues Ser315–Phe335.

Belongs to the expansin family. Expansin A subfamily.

It is found in the membrane. Its function is as follows. May serve to lubricate the movement of the cellulose microfibrils during cell growth and wall extension and/or may serve to maintain the fluid state of the slug cell wall. In Dictyostelium discoideum (Social amoeba), this protein is Expansin-like protein 3 (expl3).